Reading from the N-terminus, the 1084-residue chain is Siderophore biosynthesis regulatory protein URBS1 (1084 aa).

Disordered stretches follow at residues 1 to 164 (MALP…QSSS), 245 to 283 (AEEHAKMQRYSDEHPRAMNPTSRASYEHESRGMPYRDSY), and 300 to 337 (RPVHHADSSTNSPQYVPGDVYEHEGSGSPPAAHHAGMR). Over residues 23-51 (QAAAASSSSSSSSSHHPPPRIAARPIAPA) the composition is skewed to low complexity. Polar residues-rich tracts occupy residues 97–106 (SHHNASSTAT) and 128–141 (RSQSPIAAFRNRSQ). Low complexity predominate over residues 150–164 (PSRSQPNSPLLQSSS). The segment covering 245 to 260 (AEEHAKMQRYSDEHPR) has biased composition (basic and acidic residues). A GATA-type 1 zinc finger spans residues 338-362 (CSNCGVTSTPLWRRAPDGSTICNAC). Disordered regions lie at residues 372 to 405 (HRSASNRLSGSDASPPTHEAKLAAAGPSCSREDD) and 442 to 472 (VSKRESQTSEDPPPARTAERAPPVAEEKMDD). The segment covering 373–385 (RSASNRLSGSDAS) has biased composition (polar residues). The GATA-type 2 zinc-finger motif lies at 482 to 506 (CTNCQTTTTPLWRRDEDGNNICNAC). Disordered stretches follow at residues 559 to 595 (IAPAAGRNAGDSTPKSTESRRASKKSSLTSEQAMREA), 643 to 679 (RAGADTARTSHPDDSRSSKRPRQSYPLAPREAYDERD), 692 to 803 (THAA…TKLS), 841 to 940 (EAAG…SRRN), 953 to 1019 (AAVP…DDHW), and 1040 to 1084 (ARPV…APRT). Composition is skewed to basic and acidic residues over residues 650–659 (RTSHPDDSRS) and 715–725 (RLGRSELHGES). Over residues 752–781 (PHHHHHHHHHHANHASHAVHHGHHHHHHHP) the composition is skewed to basic residues. Positions 875–888 (RGTRSGHDSIKQEA) are enriched in basic and acidic residues. The span at 961-970 (SPPSTVSNPA) shows a compositional bias: polar residues. Over residues 1070–1084 (PVASSPSQAVSAPRT) the composition is skewed to low complexity.

The protein localises to the nucleus. Its function is as follows. Involved in the regulation of secreted ferrichrome-type siderophores. Acts directly or indirectly to repress the biosynthesis of siderophores. This chain is Siderophore biosynthesis regulatory protein URBS1 (URBS1), found in Mycosarcoma maydis (Corn smut fungus).